Consider the following 733-residue polypeptide: Catalase-peroxidase (733 aa).

Positions 1–24 (MTDDSTCPVTGGADKQVTGRGQSY) are disordered. Positions 96-219 (WHSAGTYRTL…LAAVQMGLIY (124 aa)) form a cross-link, tryptophyl-tyrosyl-methioninium (Trp-Tyr) (with M-245). The Proton acceptor role is filled by H97. The tryptophyl-tyrosyl-methioninium (Tyr-Met) (with W-96) cross-link spans 219 to 245 (YVNPEGPNGKPDPVAAAKDIRETFARM). Residue H260 participates in heme b binding.

It belongs to the peroxidase family. Peroxidase/catalase subfamily. Homodimer or homotetramer. Heme b serves as cofactor. Formation of the three residue Trp-Tyr-Met cross-link is important for the catalase, but not the peroxidase activity of the enzyme.

It catalyses the reaction H2O2 + AH2 = A + 2 H2O. The enzyme catalyses 2 H2O2 = O2 + 2 H2O. Its function is as follows. Bifunctional enzyme with both catalase and broad-spectrum peroxidase activity. The sequence is that of Catalase-peroxidase from Methanoregula boonei (strain DSM 21154 / JCM 14090 / 6A8).